The chain runs to 265 residues: Undecaprenyl-diphosphatase (265 aa).

8 helical membrane-spanning segments follow: residues 1–21 (MDWFQALVLALIQGLTEFLPI), 39–59 (QGLAFDVAVHLGTLLAVMMYY), 83–103 (LKLGLLVALATIPAVVFGFLG), 114–134 (ALVIAITTLVFGALLWASDAF), 144–164 (LGVAGAIFIGLAQALALIPGT), 188–208 (SFLLSIPVILGAGLLKTKDLI), 218–238 (MMALGVIVSAVTAYLTIVFFI), and 244–264 (VGMLPFVVYRLILGVALLFWL).

The protein belongs to the UppP family.

The protein resides in the cell inner membrane. It catalyses the reaction di-trans,octa-cis-undecaprenyl diphosphate + H2O = di-trans,octa-cis-undecaprenyl phosphate + phosphate + H(+). Catalyzes the dephosphorylation of undecaprenyl diphosphate (UPP). Confers resistance to bacitracin. In Alcanivorax borkumensis (strain ATCC 700651 / DSM 11573 / NCIMB 13689 / SK2), this protein is Undecaprenyl-diphosphatase.